The primary structure comprises 368 residues: Biglycan (368 aa).

Residues 1–16 form the signal peptide; that stretch reads MKVLLLLCSCILVIHA. Residues 17-37 constitute a propeptide that is removed on maturation; that stretch reads LPFEQRGFWDFSMDDGMAMMK. Disulfide bonds link Cys63-Cys69 and Cys67-Cys76. 12 LRR repeats span residues 82–102, 103–126, 127–150, 151–171, 172–195, 196–220, 221–241, 242–265, 266–289, 290–312, 313–342, and 343–368; these read TSIPKNLPKDTTLLDLQNNKI, TEIKKDDFKGLTNLYALVIVNNKI, SKINEKAFEPLQKMQKLYISKNNL, EEIPKNLPKSLVELRIHENKI, KKVPKGVFSGLKNMNCIEMGGNPL, ENGGIEAGAFDGLKLNYLRVSEAKL, SGIPKGLPSTLNELHLDNNKI, QAIEKEDLSQYASLYRLGLGHNNI, RMIENGSLSFMPVLRELHLDNNKL, SKVPPGLPDMKLLQVVYLHSNNI, TQVGVNDFCPIGFGVKRAYYNGISLFNNPV, and PYWEVQPATFRCVTDRLAIQFGNYRK. 2 N-linked (GlcNAc...) asparagine glycosylation sites follow: Asn270 and Asn311. Cysteines 321 and 354 form a disulfide.

The protein belongs to the small leucine-rich proteoglycan (SLRP) family. SLRP class I subfamily.

The protein localises to the secreted. It localises to the extracellular space. It is found in the extracellular matrix. May be involved in collagen fiber assembly. This Xenopus laevis (African clawed frog) protein is Biglycan (bgn).